The sequence spans 86 residues: Large ribosomal subunit protein uL23 (86 aa).

This sequence belongs to the universal ribosomal protein uL23 family. In terms of assembly, part of the 50S ribosomal subunit. Contacts protein L29.

In terms of biological role, binds to 23S rRNA. One of the proteins that surrounds the polypeptide exit tunnel on the outside of the ribosome. The chain is Large ribosomal subunit protein uL23 from Methanococcus maripaludis (strain C6 / ATCC BAA-1332).